A 300-amino-acid polypeptide reads, in one-letter code: MAIAWMDSYTRWAADFRGEHLRSWMRDHTEVPAVAVVLYLILVLYVPENVMAHRNPIKLRFLNMLWNLLLTVFSICGAYYCLPRLWEVLTSPRISGLMADPNLGPNAPPPKLPGSFYNSACAWNDKIFFDGFVGLWVAAFVLSKIPEMIDTVFLVFQKKPVIFLHWYHHATVMLFCWHAYAYTISSGLWFATMNYCVHSIMYFYYFMCACGMRKVIRPIAPLITMMQILQMVAGTLIVLYTYVKKQFMGEFCAVNNPSLRMGLLMYVSYLFLFSQLYYRSYISPAAARTLRMANGEKKGK.

The next 3 membrane-spanning stretches (helical) occupy residues 31–51 (VPAV…ENVM), 61–81 (FLNM…AYYC), and 127–147 (IFFD…KIPE). The HxxHH motif motif lies at 165–169 (HWYHH). His-168 acts as the Nucleophile in catalysis. 4 helical membrane passes run 170 to 190 (ATVM…GLWF), 192 to 212 (TMNY…ACGM), 219 to 239 (IAPL…LIVL), and 261 to 283 (MGLL…SYIS).

It belongs to the ELO family.

It localises to the endoplasmic reticulum membrane. It catalyses the reaction an acyl-CoA + malonyl-CoA + H(+) = a 3-oxoacyl-CoA + CO2 + CoA. Its pathway is lipid metabolism; fatty acid biosynthesis. Involved in the synthesis of fatty acids. Elongates C14 fatty acids to C18. Required for the maintenance of the global lipidome profile in this parasite. This Trypanosoma cruzi (strain CL Brener) protein is Fatty acid elongase 3.